The following is a 376-amino-acid chain: Succinyl-diaminopimelate desuccinylase (376 aa).

Histidine 67 contacts Zn(2+). The active site involves aspartate 69. Residue aspartate 100 participates in Zn(2+) binding. Glutamate 134 (proton acceptor) is an active-site residue. Residues glutamate 135, glutamate 163, and histidine 349 each coordinate Zn(2+).

Belongs to the peptidase M20A family. DapE subfamily. Homodimer. It depends on Zn(2+) as a cofactor. Co(2+) is required as a cofactor.

The enzyme catalyses N-succinyl-(2S,6S)-2,6-diaminopimelate + H2O = (2S,6S)-2,6-diaminopimelate + succinate. The protein operates within amino-acid biosynthesis; L-lysine biosynthesis via DAP pathway; LL-2,6-diaminopimelate from (S)-tetrahydrodipicolinate (succinylase route): step 3/3. Catalyzes the hydrolysis of N-succinyl-L,L-diaminopimelic acid (SDAP), forming succinate and LL-2,6-diaminopimelate (DAP), an intermediate involved in the bacterial biosynthesis of lysine and meso-diaminopimelic acid, an essential component of bacterial cell walls. This chain is Succinyl-diaminopimelate desuccinylase, found in Proteus mirabilis (strain HI4320).